Here is a 540-residue protein sequence, read N- to C-terminus: Extracellular matrix protein 1 (540 aa).

The first 19 residues, 1-19, serve as a signal peptide directing secretion; sequence MGTTARAALVLTYLAVASA. 2 disordered regions span residues 41-85 and 120-175; these read VGYA…EATP and LQHP…PSPD. Polar residues-rich tracts occupy residues 71 to 85 and 146 to 156; these read GQSQVQPPPSQEATP and NAAQHCQQDRS. 2 tandem repeats follow at residues 150–279 and 283–405. The tract at residues 150–405 is 2 X approximate repeats; sequence HCQQDRSQGG…FARRAPYPNY (256 aa). Asparagine 354 is a glycosylation site (N-linked (GlcNAc...) asparagine). N-linked (GlcNAc...) (complex) asparagine glycosylation occurs at asparagine 444. Positions 515–540 are disordered; sequence ENAKGQGEQGSTGGTNISSTSEPKEE. The segment covering 528–540 has biased composition (low complexity); the sequence is GTNISSTSEPKEE. Asparagine 530 is a glycosylation site (N-linked (GlcNAc...) asparagine).

As to quaternary structure, interacts (via C-terminus) with HSPG2 (via C-terminus). Interacts with EFEMP1/FBLN3 and LAMB3. Interacts with MMP9. As to expression, expressed in breast cancer tissues. Little or no expression observed in normal breast tissues. Expressed in skin; wide expression is observed throughout the dermis with minimal expression in the epidermis.

It localises to the secreted. The protein localises to the extracellular space. Its subcellular location is the extracellular matrix. Its function is as follows. Involved in endochondral bone formation as negative regulator of bone mineralization. Stimulates the proliferation of endothelial cells and promotes angiogenesis. Inhibits MMP9 proteolytic activity. The chain is Extracellular matrix protein 1 (ECM1) from Homo sapiens (Human).